Reading from the N-terminus, the 83-residue chain is MKTLLLTLLVVTIVCLDLGYTLECHNQQSSQTPTTTGCSGGETNCYKKRWRDHRGYRTERGCGCPSVKNGIEINCCTTDRCNN.

An N-terminal signal peptide occupies residues 1–21 (MKTLLLTLLVVTIVCLDLGYT). Intrachain disulfides connect Cys-24-Cys-45, Cys-38-Cys-62, Cys-64-Cys-75, and Cys-76-Cys-81.

It belongs to the three-finger toxin family. Short-chain subfamily. Type I alpha-neurotoxin sub-subfamily. As to expression, expressed by the venom gland.

The protein localises to the secreted. In terms of biological role, binds to muscle nicotinic acetylcholine receptor (nAChR) and inhibit acetylcholine from binding to the receptor, thereby impairing neuromuscular transmission. Has a higher toxicity than cobrotoxin-b. In vivo, when tested on rat arthritis models, shows anti-inflammation and immunosuppression effects. The chain is Cobrotoxin from Naja atra (Chinese cobra).